The following is a 255-amino-acid chain: 3-deoxy-manno-octulosonate cytidylyltransferase (255 aa).

Belongs to the KdsB family.

Its subcellular location is the cytoplasm. It catalyses the reaction 3-deoxy-alpha-D-manno-oct-2-ulosonate + CTP = CMP-3-deoxy-beta-D-manno-octulosonate + diphosphate. It functions in the pathway nucleotide-sugar biosynthesis; CMP-3-deoxy-D-manno-octulosonate biosynthesis; CMP-3-deoxy-D-manno-octulosonate from 3-deoxy-D-manno-octulosonate and CTP: step 1/1. The protein operates within bacterial outer membrane biogenesis; lipopolysaccharide biosynthesis. Its function is as follows. Activates KDO (a required 8-carbon sugar) for incorporation into bacterial lipopolysaccharide in Gram-negative bacteria. The protein is 3-deoxy-manno-octulosonate cytidylyltransferase of Cellvibrio japonicus (strain Ueda107) (Pseudomonas fluorescens subsp. cellulosa).